Here is an 83-residue protein sequence, read N- to C-terminus: uncharacterized protein (83 aa).

The chain crosses the membrane as a helical span at residues tyrosine 58–leucine 80.

The protein resides in the membrane. This is an uncharacterized protein from Bacillus subtilis (strain 168).